A 360-amino-acid chain; its full sequence is Putative F-box protein At3g47150 (360 aa).

An F-box domain is found at 6-56 (NTTQIYIPLDLQINILLRLPVKSLLRFRCVSKLWCSIITSHDFRNRHFNIT).

The polypeptide is Putative F-box protein At3g47150 (Arabidopsis thaliana (Mouse-ear cress)).